The chain runs to 515 residues: 1-pyrroline-5-carboxylate dehydrogenase (515 aa).

Catalysis depends on residues E286 and C320.

The protein belongs to the aldehyde dehydrogenase family. RocA subfamily.

It catalyses the reaction L-glutamate 5-semialdehyde + NAD(+) + H2O = L-glutamate + NADH + 2 H(+). Its pathway is amino-acid degradation; L-proline degradation into L-glutamate; L-glutamate from L-proline: step 2/2. This is 1-pyrroline-5-carboxylate dehydrogenase from Geobacillus thermodenitrificans (strain NG80-2).